The sequence spans 311 residues: RNA polymerase sigma factor SigA4 (311 aa).

The segment at 78–148 (MLKANLRLVV…TRAIDNHART (71 aa)) is sigma-70 factor domain-2. The Interaction with polymerase core subunit RpoC signature appears at 102 to 105 (DLIQ). The segment at 157-234 (EKISRIKKMT…DPKSLEPMDA (78 aa)) is sigma-70 factor domain-3. Positions 247-304 (WLAHLTEREQQVLQLRFGLHDGEQHTLAEIGRRLNVSRERIRQVEARALQKLRVLSQQ) are sigma-70 factor domain-4. The segment at residues 273 to 292 (LAEIGRRLNVSRERIRQVEA) is a DNA-binding region (H-T-H motif).

Belongs to the sigma-70 factor family.

It is found in the cytoplasm. Its function is as follows. Sigma factors are initiation factors that promote the attachment of RNA polymerase to specific initiation sites and are then released. The polypeptide is RNA polymerase sigma factor SigA4 (sigA4) (Synechococcus elongatus (strain ATCC 33912 / PCC 7942 / FACHB-805) (Anacystis nidulans R2)).